The primary structure comprises 398 residues: 8-amino-7-oxononanoate synthase (398 aa).

Substrate contacts are provided by R22 and R29. 109-110 (GW) is a pyridoxal 5'-phosphate binding site. Substrate is bound at residue H141. Residues S189, 214–217 (DEAH), and 242–245 (TFSK) each bind pyridoxal 5'-phosphate. K245 bears the N6-(pyridoxal phosphate)lysine mark. T359 contacts substrate.

It belongs to the class-II pyridoxal-phosphate-dependent aminotransferase family. BioF subfamily. As to quaternary structure, homodimer. Pyridoxal 5'-phosphate is required as a cofactor.

It carries out the reaction 6-carboxyhexanoyl-[ACP] + L-alanine + H(+) = (8S)-8-amino-7-oxononanoate + holo-[ACP] + CO2. The protein operates within cofactor biosynthesis; biotin biosynthesis. Functionally, catalyzes the decarboxylative condensation of pimeloyl-[acyl-carrier protein] and L-alanine to produce 8-amino-7-oxononanoate (AON), [acyl-carrier protein], and carbon dioxide. The protein is 8-amino-7-oxononanoate synthase of Gluconacetobacter diazotrophicus (strain ATCC 49037 / DSM 5601 / CCUG 37298 / CIP 103539 / LMG 7603 / PAl5).